Consider the following 515-residue polypeptide: RNA exonuclease NGL2 (515 aa).

2 disordered regions span residues 1 to 54 (MTQD…SKPI) and 353 to 381 (RDGE…PVPE). Basic and acidic residues predominate over residues 21-34 (EINKSVKDAKHQTN). Over residues 40–52 (QHKKKGKKGKKSK) the composition is skewed to basic residues. Positions 369 to 381 (KYGKDQPESPVPE) are enriched in basic and acidic residues.

It belongs to the CCR4/nocturin family.

Its subcellular location is the cytoplasm. The protein resides in the nucleus. Its function is as follows. Involved in pre-rRNA processing. Required for the final stage of 3'-end maturation of 5.8S rRNA at site E. This is RNA exonuclease NGL2 (NGL2) from Saccharomyces cerevisiae (strain ATCC 204508 / S288c) (Baker's yeast).